Reading from the N-terminus, the 204-residue chain is Linker for activation of T-cells family member 2 (204 aa).

Residues 1–7 (MNAELEL) lie on the Extracellular side of the membrane. A helical; Signal-anchor for type III membrane protein transmembrane segment spans residues 8–28 (LWPLSGLLLLLLLGTTAWLCV). 2 S-palmitoyl cysteine lipidation sites follow: cysteine 27 and cysteine 30. Residues 29–204 (QCSRPGVKRN…NGDVATTEKI (176 aa)) are Cytoplasmic-facing. Tyrosine 60 carries the post-translational modification Phosphotyrosine. Residues serine 61 and serine 96 each carry the phosphoserine modification. Phosphotyrosine is present on residues tyrosine 140, tyrosine 161, and tyrosine 193. The interval 147-204 (KPSTPESGTEESEDYQNSVSILQWRESKRTMGARTSPSGSPDEEPDYVNGDVATTEKI) is disordered.

When phosphorylated, interacts with GRB2. May also interact with SOS1, GAB1 and CBL. Post-translationally, phosphorylated on tyrosines following cross-linking of BCR in B-cells, high affinity IgG receptor (FCGR1) in myeloid cells, or high affinity IgE receptor (FCER1) in mast cells; which induces the recruitment of GRB2.

It localises to the cell membrane. In terms of biological role, involved in FCER1 (high affinity immunoglobulin epsilon receptor)-mediated signaling in mast cells. May also be involved in BCR (B-cell antigen receptor)-mediated signaling in B-cells and FCGR1 (high affinity immunoglobulin gamma Fc receptor I)-mediated signaling in myeloid cells. Couples activation of these receptors and their associated kinases with distal intracellular events through the recruitment of GRB2. This is Linker for activation of T-cells family member 2 (Lat2) from Rattus norvegicus (Rat).